The chain runs to 316 residues: MAIVSVKLTSNQVDKFLILWRPYLVHNNHNYAKYTFKIDGTLIIIYNTNTCTINTHDINSFLNTFLKREDLTLFNVIKQQVNTKKNNQNVMSQSEIYESAQVIIGSDEVGVGDLFGGIVVCAVSLKKSDFKKINHLKIIDSKKLNDQQMQEIYQQIKNQISYTIVSYNPKEYNELIKEYNNAHILKTILHYKALQSEIHKHAKYSIFSVVDAFSSLKNWNQYLQKVNFQPYEPNLLIPKAESIYTSVALASIIARVMFLKMIAIIEEQFNVKIPLGSSNPLVNDVASNIFQKFGLKILKQVAKEHFSNFQQIIKNK.

The RNase H type-2 domain maps to 101 to 316; sequence QVIIGSDEVG…SNFQQIIKNK (216 aa). A divalent metal cation contacts are provided by Asp-107, Glu-108, and Asp-211.

Belongs to the RNase HII family. RnhC subfamily. Mn(2+) serves as cofactor. The cofactor is Mg(2+).

It is found in the cytoplasm. The enzyme catalyses Endonucleolytic cleavage to 5'-phosphomonoester.. In terms of biological role, endonuclease that specifically degrades the RNA of RNA-DNA hybrids. The polypeptide is Ribonuclease HIII (rnhC) (Ureaplasma parvum serovar 3 (strain ATCC 700970)).